Consider the following 654-residue polypeptide: tRNA 5-methylaminomethyl-2-thiouridine biosynthesis bifunctional protein MnmC (654 aa).

The segment at 1–235 (MSDFQHAQLD…KREMLSGTYQ (235 aa)) is tRNA (mnm(5)s(2)U34)-methyltransferase. Residues 261–654 (VGGGLAGCAS…LRDLVRGQRG (394 aa)) are FAD-dependent cmnm(5)s(2)U34 oxidoreductase.

In the N-terminal section; belongs to the methyltransferase superfamily. tRNA (mnm(5)s(2)U34)-methyltransferase family. This sequence in the C-terminal section; belongs to the DAO family. It depends on FAD as a cofactor.

The protein resides in the cytoplasm. The enzyme catalyses 5-aminomethyl-2-thiouridine(34) in tRNA + S-adenosyl-L-methionine = 5-methylaminomethyl-2-thiouridine(34) in tRNA + S-adenosyl-L-homocysteine + H(+). Its function is as follows. Catalyzes the last two steps in the biosynthesis of 5-methylaminomethyl-2-thiouridine (mnm(5)s(2)U) at the wobble position (U34) in tRNA. Catalyzes the FAD-dependent demodification of cmnm(5)s(2)U34 to nm(5)s(2)U34, followed by the transfer of a methyl group from S-adenosyl-L-methionine to nm(5)s(2)U34, to form mnm(5)s(2)U34. The chain is tRNA 5-methylaminomethyl-2-thiouridine biosynthesis bifunctional protein MnmC from Pseudomonas aeruginosa (strain ATCC 15692 / DSM 22644 / CIP 104116 / JCM 14847 / LMG 12228 / 1C / PRS 101 / PAO1).